The chain runs to 570 residues: Urease subunit alpha 1 (570 aa).

The region spanning 131–570 is the Urease domain; sequence GGIDTHVHFI…VPMAQRYFLF (440 aa). 3 residues coordinate Ni(2+): histidine 136, histidine 138, and lysine 219. At lysine 219 the chain carries N6-carboxylysine. Residue histidine 221 coordinates substrate. Ni(2+)-binding residues include histidine 248 and histidine 274. The active-site Proton donor is histidine 322. Position 362 (aspartate 362) interacts with Ni(2+).

The protein belongs to the metallo-dependent hydrolases superfamily. Urease alpha subunit family. In terms of assembly, heterotrimer of UreA (gamma), UreB (beta) and UreC (alpha) subunits. Three heterotrimers associate to form the active enzyme. Ni cation is required as a cofactor. Post-translationally, carboxylation allows a single lysine to coordinate two nickel ions.

Its subcellular location is the cytoplasm. The enzyme catalyses urea + 2 H2O + H(+) = hydrogencarbonate + 2 NH4(+). The protein operates within nitrogen metabolism; urea degradation; CO(2) and NH(3) from urea (urease route): step 1/1. The polypeptide is Urease subunit alpha 1 (Brucella melitensis biotype 1 (strain ATCC 23456 / CCUG 17765 / NCTC 10094 / 16M)).